Here is an 82-residue protein sequence, read N- to C-terminus: ATP synthase subunit c, chloroplastic (82 aa).

2 helical membrane-spanning segments follow: residues 4-24 and 57-77; these read IISA…AIGP and LAFM…LLFA.

The protein belongs to the ATPase C chain family. As to quaternary structure, F-type ATPases have 2 components, F(1) - the catalytic core - and F(0) - the membrane proton channel. F(1) has five subunits: alpha(3), beta(3), gamma(1), delta(1), epsilon(1). F(0) has four main subunits: a(1), b(1), b'(1) and c(10-14). The alpha and beta chains form an alternating ring which encloses part of the gamma chain. F(1) is attached to F(0) by a central stalk formed by the gamma and epsilon chains, while a peripheral stalk is formed by the delta, b and b' chains.

The protein localises to the plastid. It localises to the chloroplast thylakoid membrane. In terms of biological role, f(1)F(0) ATP synthase produces ATP from ADP in the presence of a proton or sodium gradient. F-type ATPases consist of two structural domains, F(1) containing the extramembraneous catalytic core and F(0) containing the membrane proton channel, linked together by a central stalk and a peripheral stalk. During catalysis, ATP synthesis in the catalytic domain of F(1) is coupled via a rotary mechanism of the central stalk subunits to proton translocation. Functionally, key component of the F(0) channel; it plays a direct role in translocation across the membrane. A homomeric c-ring of between 10-14 subunits forms the central stalk rotor element with the F(1) delta and epsilon subunits. This is ATP synthase subunit c, chloroplastic from Antithamnion sp. (Red alga).